The chain runs to 2210 residues: Filamin-A (2210 aa).

Calponin-homology (CH) domains lie at 15–120 (KIQQ…LHYS) and 139–242 (HTPK…NSKL). Filamin repeat units lie at residues 249–347 (RPKT…PVKV), 349–447 (GHAG…PVKV), 448–544 (APLS…EVKV), 545–635 (GPKK…IAQI), 638–734 (RTDF…RVYV), 735–831 (GVPV…VVVE), 832–929 (QTVD…VVNV), 930–1022 (KSGC…RVLV), 1023–1121 (EETV…VMTV), 1122–1217 (FPKS…KLEA), 1218–1312 (FPTG…SIKA), 1322–1423 (SEYI…KFHV), 1424–1515 (DSIT…FAKI), 1516–1603 (TGEG…KVTV), 1606–1698 (REVG…TVKV), 1699–1796 (AGEG…QFTV), 1799–1891 (LRDS…KVYV), 1893–1986 (PDAG…RIKV), 1988–2079 (KDVA…KVNA), and 2116–2210 (TFKS…QIDV).

This sequence belongs to the filamin family. Interacts with Ten-m. In terms of tissue distribution, germline-specific in females (at protein level). Expressed in ovary.

The protein resides in the cytoplasm. It localises to the cytoskeleton. The protein localises to the cell membrane. Functionally, involved in the germline ring canal formation. May tether actin microfilament within the ovarian ring canal to the cell membrane. Contributes to actin microfilaments organization. This Drosophila melanogaster (Fruit fly) protein is Filamin-A (cher).